Here is a 471-residue protein sequence, read N- to C-terminus: V-type ATP synthase beta chain (471 aa).

This sequence belongs to the ATPase alpha/beta chains family.

Produces ATP from ADP in the presence of a proton gradient across the membrane. The V-type beta chain is a regulatory subunit. The chain is V-type ATP synthase beta chain from Deinococcus deserti (strain DSM 17065 / CIP 109153 / LMG 22923 / VCD115).